The sequence spans 244 residues: Type III pantothenate kinase (244 aa).

7–14 provides a ligand contact to ATP; that stretch reads DIGNTRLK. Residues Tyr95 and 102–105 contribute to the substrate site; that span reads GIDR. Catalysis depends on Asp104, which acts as the Proton acceptor. Thr126 provides a ligand contact to ATP. Thr177 provides a ligand contact to substrate.

It belongs to the type III pantothenate kinase family. Homodimer. NH4(+) serves as cofactor. K(+) is required as a cofactor.

Its subcellular location is the cytoplasm. The enzyme catalyses (R)-pantothenate + ATP = (R)-4'-phosphopantothenate + ADP + H(+). It functions in the pathway cofactor biosynthesis; coenzyme A biosynthesis; CoA from (R)-pantothenate: step 1/5. Functionally, catalyzes the phosphorylation of pantothenate (Pan), the first step in CoA biosynthesis. The polypeptide is Type III pantothenate kinase (Acinetobacter baumannii (strain AB307-0294)).